We begin with the raw amino-acid sequence, 133 residues long: Small ribosomal subunit protein uS8 (133 aa).

The protein belongs to the universal ribosomal protein uS8 family. As to quaternary structure, part of the 30S ribosomal subunit. Contacts proteins S5 and S12.

In terms of biological role, one of the primary rRNA binding proteins, it binds directly to 16S rRNA central domain where it helps coordinate assembly of the platform of the 30S subunit. The protein is Small ribosomal subunit protein uS8 of Chlorobaculum parvum (strain DSM 263 / NCIMB 8327) (Chlorobium vibrioforme subsp. thiosulfatophilum).